Here is a 234-residue protein sequence, read N- to C-terminus: Transcriptional regulatory protein CitB (234 aa).

The Response regulatory domain maps to 5-121 (TTLIVEDEPM…RLQHTLERFA (117 aa)). Aspartate 56 carries the 4-aspartylphosphate modification. The segment at residues 181–200 (ADSLARILGSSKTTARRYLE) is a DNA-binding region (H-T-H motif).

In terms of assembly, in vitro CitB and the CitA kinase domain form a complex, formation of which is enhanced by ATP. Post-translationally, phosphorylated by CitA.

It localises to the cytoplasm. Its function is as follows. Member of the two-component regulatory system CitA/CitB essential for expression of citrate-specific fermentation genes. Phosphorylated CitB binds to two sites in the citS-citC intergenic region where it probably activates transcription of both genes. The polypeptide is Transcriptional regulatory protein CitB (citB) (Klebsiella pneumoniae).